The sequence spans 561 residues: Asparagine synthetase [glutamine-hydrolyzing] (561 aa).

The active-site For GATase activity is C2. In terms of domain architecture, Glutamine amidotransferase type-2 spans 2-191; that stretch reads CGIWALFGSD…PGHYEVLDLK (190 aa). Residues 49-53, 75-77, and D97 each bind L-glutamine; these read RLAVV and NGE. In terms of domain architecture, Asparagine synthetase spans 213 to 536; sequence HALYDGVEKL…PGRADWLPHY (324 aa). Residues L256, I288, and 363-364 each bind ATP; that span reads SG. K385 is modified (N6-acetyllysine). Residue T545 is modified to Phosphothreonine.

It carries out the reaction L-aspartate + L-glutamine + ATP + H2O = L-asparagine + L-glutamate + AMP + diphosphate + H(+). It participates in amino-acid biosynthesis; L-asparagine biosynthesis; L-asparagine from L-aspartate (L-Gln route): step 1/1. This Bos taurus (Bovine) protein is Asparagine synthetase [glutamine-hydrolyzing] (ASNS).